The chain runs to 400 residues: Phosphoglycerate kinase (400 aa).

Residues 24–26 (DFN), Arg-40, 63–66 (HFGR), Arg-121, and Arg-154 each bind substrate. Residues Lys-205, Gly-296, Glu-327, and 356–359 (GGDS) contribute to the ATP site.

In terms of assembly, monomer.

The protein localises to the cytoplasm. It catalyses the reaction (2R)-3-phosphoglycerate + ATP = (2R)-3-phospho-glyceroyl phosphate + ADP. The protein operates within carbohydrate degradation; glycolysis; pyruvate from D-glyceraldehyde 3-phosphate: step 2/5. In Nostoc sp. (strain PCC 7120 / SAG 25.82 / UTEX 2576), this protein is Phosphoglycerate kinase.